We begin with the raw amino-acid sequence, 139 residues long: Protein archease (139 aa).

Ca(2+)-binding residues include aspartate 12, aspartate 138, and isoleucine 139.

This sequence belongs to the archease family.

Its function is as follows. Activates the tRNA-splicing ligase complex by facilitating the enzymatic turnover of catalytic subunit RtcB. Acts by promoting the guanylylation of RtcB, a key intermediate step in tRNA ligation. Can also alter the NTP specificity of RtcB such that ATP, dGTP or ITP is used efficiently. This Saccharolobus islandicus (strain L.S.2.15 / Lassen #1) (Sulfolobus islandicus) protein is Protein archease.